The sequence spans 130 residues: Small ribosomal subunit protein uS9 (130 aa).

Positions 109–130 (RAKERKKYGLYGARRSPQFTKR) are disordered.

The protein belongs to the universal ribosomal protein uS9 family.

The chain is Small ribosomal subunit protein uS9 from Malacoplasma penetrans (strain HF-2) (Mycoplasma penetrans).